The primary structure comprises 1125 residues: Angiopoietin-1 receptor (1125 aa).

The first 22 residues, 1 to 22 (MDSLAGLVLCGVSLLLSATVDG), serve as a signal peptide directing secretion. Residues 23–748 (AMDLILINSL…PADLGGRKML (726 aa)) are Extracellular-facing. Cys44 and Cys102 are disulfide-bonded. Positions 44 to 123 (CIASGWRPHE…RTMKMRQQAS (80 aa)) constitute an Ig-like C2-type 1 domain. N-linked (GlcNAc...) asparagine glycosylation occurs at Asn158. EGF-like domains follow at residues 210 to 252 (RCEA…RTCE), 254 to 299 (ACEP…LQCN), and 301 to 341 (ACQP…LQCE). Disulfide bonds link Cys211–Cys220, Cys224–Cys233, Cys227–Cys240, Cys242–Cys251, Cys255–Cys264, Cys268–Cys274, Cys280–Cys287, Cys289–Cys298, Cys302–Cys311, Cys315–Cys323, Cys317–Cys329, Cys331–Cys340, and Cys370–Cys424. One can recognise an Ig-like C2-type 2 domain in the interval 350–440 (PKIEDLPDHI…GMVEKPFNIS (91 aa)). 3 Fibronectin type-III domains span residues 447–541 (PLNA…TASI), 545–637 (PPRG…TLSD), and 642–735 (QPEN…TLSE). A helical transmembrane segment spans residues 749 to 769 (LIAILGSAGMTCLTVLLAFLI). Topologically, residues 770-1125 (MLQLKRANVQ…GIDCSAEEAA (356 aa)) are cytoplasmic. Residues 825–1097 (IKFQDVIGEG…QILVSLNRML (273 aa)) form the Protein kinase domain. Residues 831 to 839 (IGEGNFGQV) and Lys856 each bind ATP. Tyr861 is modified (phosphotyrosine; by autocatalysis). Catalysis depends on Asp965, which acts as the Proton acceptor. Phosphotyrosine; by autocatalysis is present on residues Tyr993, Tyr1103, and Tyr1109.

This sequence belongs to the protein kinase superfamily. Tyr protein kinase family. Tie subfamily. In terms of assembly, homodimer. Heterodimer with TIE1. Interacts with ANGPT1, ANGPT2 and ANGPT4. At cell-cell contacts in quiescent cells, forms a signaling complex composed of ANGPT1 plus TEK molecules from two adjoining cells. In the absence of endothelial cell-cell contacts, interaction with ANGPT1 mediates contacts with the extracellular matrix. Interacts (tyrosine phosphorylated) with TNIP2. Interacts (tyrosine phosphorylated) with SHC1 (via SH2 domain). Interacts with PTPRB; this promotes endothelial cell-cell adhesion. Interacts with DOK2, GRB2, GRB7, GRB14, PIK3R1 and PTPN11/SHP2. Colocalizes with DOK2 at contacts with the extracellular matrix in migrating cells. In terms of processing, proteolytic processing leads to the shedding of the extracellular domain (soluble TIE-2 alias sTIE-2). Autophosphorylated on tyrosine residues in response to ligand binding. Autophosphorylation occurs in trans, i.e. one subunit of the dimeric receptor phosphorylates tyrosine residues on the other subunit. Autophosphorylation occurs in a sequential manner, where Tyr-993 in the kinase activation loop is phosphorylated first, followed by autophosphorylation at Tyr-1109 and at additional tyrosine residues. ANGPT1-induced phosphorylation is impaired during hypoxia, due to increased expression of ANGPT2. Phosphorylation is important for interaction with GRB14, PIK3R1 and PTPN11. Phosphorylation at Tyr-1103 is important for interaction with GRB2 and GRB7. Phosphorylation at Tyr-1109 is important for interaction with DOK2 and for coupling to downstream signal transduction pathways in endothelial cells. Dephosphorylated by PTPRB. Post-translationally, ubiquitinated. The phosphorylated receptor is ubiquitinated and internalized, leading to its degradation. In terms of tissue distribution, specifically expressed in developing vascular endothelial cells.

It localises to the cell membrane. The protein localises to the cell junction. Its subcellular location is the focal adhesion. It is found in the cytoplasm. The protein resides in the cytoskeleton. It localises to the secreted. The enzyme catalyses L-tyrosyl-[protein] + ATP = O-phospho-L-tyrosyl-[protein] + ADP + H(+). With respect to regulation, angiopoietin binding leads to receptor dimerization and activation by autophosphorylation at Tyr-993 on the kinase activation loop. Its function is as follows. Tyrosine-protein kinase that acts as a cell-surface receptor for ANGPT1, ANGPT2 and ANGPT4 and regulates angiogenesis, endothelial cell survival, proliferation, migration, adhesion and cell spreading, reorganization of the actin cytoskeleton, but also maintenance of vascular quiescence. Has anti-inflammatory effects by preventing the leakage of pro-inflammatory plasma proteins and leukocytes from blood vessels. Required for normal angiogenesis and heart development during embryogenesis. Required for post-natal hematopoiesis. After birth, activates or inhibits angiogenesis, depending on the context. Inhibits angiogenesis and promotes vascular stability in quiescent vessels, where endothelial cells have tight contacts. In quiescent vessels, ANGPT1 oligomers recruit TEK to cell-cell contacts, forming complexes with TEK molecules from adjoining cells, and this leads to preferential activation of phosphatidylinositol 3-kinase and the AKT1 signaling cascades. In migrating endothelial cells that lack cell-cell adhesions, ANGT1 recruits TEK to contacts with the extracellular matrix, leading to the formation of focal adhesion complexes, activation of PTK2/FAK and of the downstream kinases MAPK1/ERK2 and MAPK3/ERK1, and ultimately to the stimulation of sprouting angiogenesis. ANGPT1 signaling triggers receptor dimerization and autophosphorylation at specific tyrosine residues that then serve as binding sites for scaffold proteins and effectors. Signaling is modulated by ANGPT2 that has lower affinity for TEK, can promote TEK autophosphorylation in the absence of ANGPT1, but inhibits ANGPT1-mediated signaling by competing for the same binding site. Signaling is also modulated by formation of heterodimers with TIE1, and by proteolytic processing that gives rise to a soluble TEK extracellular domain. The soluble extracellular domain modulates signaling by functioning as decoy receptor for angiopoietins. TEK phosphorylates DOK2, GRB7, GRB14, PIK3R1, SHC1 and TIE1. This chain is Angiopoietin-1 receptor (TEK), found in Bos taurus (Bovine).